An 827-amino-acid polypeptide reads, in one-letter code: Penicillin-binding protein 1A (827 aa).

Residues 1–18 (MGKKKKKRKSSAFKIILN) are Cytoplasmic-facing. Residues 19–39 (VFLSIFLVAGVAFGGIVFAMI) traverse the membrane as a helical; Signal-anchor for type II membrane protein segment. At 40–827 (KTAPPLNVQQ…QNHEDNKNKQ (788 aa)) the chain is on the extracellular side. The transglycosylase stretch occupies residues 57-229 (SILYDDKGQY…PSVYYPYSSA (173 aa)). Glu96 acts as the Proton donor; for transglycosylase activity in catalysis. Residues 357–641 (ASAVIMDYHN…AARLWGDIMK (285 aa)) form a transpeptidase region. The active-site Acyl-ester intermediate; for transpeptidase activity is the Ser398. The disordered stretch occupies residues 755 to 827 (GSLPPTEEKN…QNHEDNKNKQ (73 aa)). The span at 760–790 (TEEKNNSNTRDKNKDKNKDKDKNKNKDKNPS) shows a compositional bias: basic and acidic residues. The span at 791-817 (QDKPNNNNNNNNNDNNNNTKPPENDSN) shows a compositional bias: low complexity. Positions 818–827 (QNHEDNKNKQ) are enriched in basic and acidic residues.

In the N-terminal section; belongs to the glycosyltransferase 51 family. It in the C-terminal section; belongs to the transpeptidase family.

The protein resides in the cell membrane. The enzyme catalyses [GlcNAc-(1-&gt;4)-Mur2Ac(oyl-L-Ala-gamma-D-Glu-L-Lys-D-Ala-D-Ala)](n)-di-trans,octa-cis-undecaprenyl diphosphate + beta-D-GlcNAc-(1-&gt;4)-Mur2Ac(oyl-L-Ala-gamma-D-Glu-L-Lys-D-Ala-D-Ala)-di-trans,octa-cis-undecaprenyl diphosphate = [GlcNAc-(1-&gt;4)-Mur2Ac(oyl-L-Ala-gamma-D-Glu-L-Lys-D-Ala-D-Ala)](n+1)-di-trans,octa-cis-undecaprenyl diphosphate + di-trans,octa-cis-undecaprenyl diphosphate + H(+). It carries out the reaction Preferential cleavage: (Ac)2-L-Lys-D-Ala-|-D-Ala. Also transpeptidation of peptidyl-alanyl moieties that are N-acyl substituents of D-alanine.. The protein operates within cell wall biogenesis; peptidoglycan biosynthesis. Cell wall formation. Synthesis of cross-linked peptidoglycan from the lipid intermediates. The enzyme has a penicillin-insensitive transglycosylase N-terminal domain (formation of linear glycan strands) and a penicillin-sensitive transpeptidase C-terminal domain (cross-linking of the peptide subunits). The polypeptide is Penicillin-binding protein 1A (pbpA) (Clostridium botulinum (strain Langeland / NCTC 10281 / Type F)).